The chain runs to 284 residues: Putative ABC transporter ATP-binding protein PH1815 (284 aa).

Residues 4–244 (IEVEDVSFRY…VEFLRTIGVK (241 aa)) enclose the ABC transporter domain. 38-45 (GPSGSGKS) is a binding site for ATP.

It belongs to the ABC transporter superfamily.

It is found in the cell membrane. Functionally, probably part of an ABC transporter complex. Responsible for energy coupling to the transport system. This is Putative ABC transporter ATP-binding protein PH1815 from Pyrococcus horikoshii (strain ATCC 700860 / DSM 12428 / JCM 9974 / NBRC 100139 / OT-3).